Reading from the N-terminus, the 807-residue chain is Dual specificity protein kinase YAK1 (807 aa).

Over residues 1–19 the composition is skewed to low complexity; that stretch reads MNSSNNNDSSSSNSNMNNS. Residues 1 to 84 form a disordered region; the sequence is MNSSNNNDSS…QQQQQQQQNS (84 aa). A compositionally biased stretch (polar residues) spans 20-31; the sequence is LSPTLVTHSDAS. A Phosphoserine modification is found at serine 38. Low complexity predominate over residues 55 to 84; sequence NQGSQRSPQQQHQNHHQQQQQQQQQQQQNS. Phosphoserine occurs at positions 115, 118, and 127. Residues 124–180 form a disordered region; the sequence is RRKSSLVVPPARAPAPNPFQYDSYPAYTSSNTSLAGNSSGQYPSGYQQQQQQVYQQG. Over residues 149–160 the composition is skewed to polar residues; the sequence is AYTSSNTSLAGN. Over residues 161–180 the composition is skewed to low complexity; the sequence is SSGQYPSGYQQQQQQVYQQG. Serine 206 is modified (phosphoserine). Positions 214–224 are enriched in low complexity; sequence SNFSSLNSNTN. Residues 214-254 are disordered; it reads SNFSSLNSNTNQGTNSIPVMSPYRRLSAYPPSTSPPLQPPF. A phosphoserine mark is found at serine 240, serine 245, and serine 247. Threonine 288 carries the post-translational modification Phosphothreonine. Serine 295 carries the phosphoserine modification. One can recognise a Protein kinase domain in the interval 369 to 704; the sequence is YLVLDILGQG…PQQAMLHPFI (336 aa). ATP is bound by residues 375-383 and lysine 398; that span reads LGQGTFGQV. Aspartate 496 functions as the Proton acceptor in the catalytic mechanism. At tyrosine 530 the chain carries Phosphotyrosine. The interval 714–758 is disordered; sequence FPPGSSLPGPSEKHDDAKGQQSEYGSANDSSNNAGHNYVYNPSSA. Over residues 732 to 758 the composition is skewed to polar residues; that stretch reads GQQSEYGSANDSSNNAGHNYVYNPSSA.

This sequence belongs to the protein kinase superfamily. CMGC Ser/Thr protein kinase family. MNB/DYRK subfamily. Phosphorylated; highly.

The protein localises to the cytoplasm. The protein resides in the nucleus. The catalysed reaction is L-seryl-[protein] + ATP = O-phospho-L-seryl-[protein] + ADP + H(+). It catalyses the reaction L-threonyl-[protein] + ATP = O-phospho-L-threonyl-[protein] + ADP + H(+). The enzyme catalyses L-tyrosyl-[protein] + ATP = O-phospho-L-tyrosyl-[protein] + ADP + H(+). Functionally, negative regulator of the cell cycle acting downstream of the cAMP-dependent protein kinase. Part of a glucose-sensing system involved in growth control in response to glucose availability. Phosphorylates POP2. The sequence is that of Dual specificity protein kinase YAK1 (YAK1) from Saccharomyces cerevisiae (strain ATCC 204508 / S288c) (Baker's yeast).